We begin with the raw amino-acid sequence, 678 residues long: RxLR effector protein PITG_16705 (678 aa).

The N-terminal stretch at 1-20 (MHLFFLTAVAFVITSVSVDA) is a signal peptide. The RxLR-dEER motif lies at 46-61 (RLLRKNSTVDLVGEER).

It belongs to the RxLR effector family.

The protein resides in the secreted. It localises to the host cytoplasm. Effector that enhances P.infestans colonization of Nicotiana benthamiana leaves. The chain is RxLR effector protein PITG_16705 from Phytophthora infestans (strain T30-4) (Potato late blight agent).